The chain runs to 386 residues: Phosphoglycerate kinase (386 aa).

Substrate contacts are provided by residues 21–23, arginine 36, 59–62, arginine 112, and arginine 145; these read DLN and HLGR. ATP is bound by residues lysine 196, glutamate 313, and 339–342; that span reads GGDT.

It belongs to the phosphoglycerate kinase family. Monomer.

It localises to the cytoplasm. The catalysed reaction is (2R)-3-phosphoglycerate + ATP = (2R)-3-phospho-glyceroyl phosphate + ADP. Its pathway is carbohydrate degradation; glycolysis; pyruvate from D-glyceraldehyde 3-phosphate: step 2/5. This Haemophilus influenzae (strain PittGG) protein is Phosphoglycerate kinase.